Here is a 275-residue protein sequence, read N- to C-terminus: Putative acyl-[acyl-carrier-protein] desaturase DesA2 (275 aa).

The Fe cation site is built by Glu107, His110, Glu159, Glu189, and His192.

This sequence belongs to the fatty acid desaturase type 2 family. Homodimer. Fe(2+) is required as a cofactor.

The protein operates within lipid metabolism; fatty acid metabolism. Functionally, may be a desaturase involved in mycobacterial fatty acid biosynthesis. This is Putative acyl-[acyl-carrier-protein] desaturase DesA2 (desA2) from Mycobacterium tuberculosis (strain CDC 1551 / Oshkosh).